The following is a 940-amino-acid chain: MSKKRLNEIARELGVSSKEVVAKAQELGFEVKSHASSVDEASAKRLAESFGGQKSEATKVAAKVSKPEKVDETPKVETAKVEKAKETQPVVKEEVAASAVQSASHRPQSRNFKAEREARAKEQAAKRAQNQGKGGQAKSDQDRRDNRQLGQGRSNNERNDRRDNRRDQRPEERKDNRFGDRRDNRDNRRQDNRSGRLARFEQREAAKPAGPKIDFKARAAALKAEQNAEYARTSEERFRQAQEAKKQPKKPKEIKFEEPVVESKPFVKPALVASVPEQVAETTVDTRRKKQARPDKKRDFNSDEEDGPRKQQRNRNSQNQVRNQRTSNWNNNKKNKKGKANQPAKPVTERKFHELPTEFEYTAGMTVAEIAKRIKREPAEIVKKLFLMGVMATQNQSLDGDTIELLMVDYGIEAKEKVEVDNADIERFFVEEGYLNEEEMTERPPVVTIMGHVDHGKTTLLDTLRNSRVATGEAGGITQHIGAYQIEEAGKKITFLDTPGHAAFTSMRARGASVTDLTILVVAADDGVMPQTIEAINHSKAANVPIIVAINKIDKPGANPERVIGELAEHGVISTAWGGESEFVEISAKFNQNIDELLETVLLVAEIQELKADPTVRAIGTVIEAHLDKGKGAVATLLVQQGTLNVQDPIVVGNTFGRVRAMTNDLGRRVKTAGPSTPVSITGLNETPMAGDHFAVYEDEKSARAAGEERAKRALLKQRQATQRVSLENLFDTLKAGEVKSVNVIIKADVQGSVEALASSLQKIEVEGVRVNIVHSAVGAINESDITLAEASNALVIGFNVRPTAEARSQAEADDVEVRLHSIIYKVIEEMEDAMKGMLDPEYEEKIIGEAIIRETFKVSKVGTIGGFMVVRGKVTRDSSVRVIRDGVVVFDGKLASLKRYKDDVKEVGNAQEGGLMIENYNDLKVDDTIEAYIMEEIKK.

Disordered stretches follow at residues 48 to 264 (ESFG…VESK) and 278 to 351 (QVAE…TERK). 5 stretches are compositionally biased toward basic and acidic residues: residues 65-95 (SKPE…KEEV), 112-125 (FKAE…EQAA), 155-206 (NNER…REAA), 232-258 (RTSE…KFEE), and 292-301 (ARPDKKRDFN). Over residues 314-332 (NRNSQNQVRNQRTSNWNNN) the composition is skewed to low complexity. In terms of domain architecture, tr-type G spans 442–609 (ERPPVVTIMG…TVLLVAEIQE (168 aa)). A G1 region spans residues 451 to 458 (GHVDHGKT). A GTP-binding site is contributed by 451-458 (GHVDHGKT). The segment at 476–480 (GITQH) is G2. Positions 497–500 (DTPG) are G3. GTP-binding positions include 497 to 501 (DTPGH) and 551 to 554 (NKID). The segment at 551–554 (NKID) is G4. Positions 587-589 (SAK) are G5.

The protein belongs to the TRAFAC class translation factor GTPase superfamily. Classic translation factor GTPase family. IF-2 subfamily.

It localises to the cytoplasm. Functionally, one of the essential components for the initiation of protein synthesis. Protects formylmethionyl-tRNA from spontaneous hydrolysis and promotes its binding to the 30S ribosomal subunits. Also involved in the hydrolysis of GTP during the formation of the 70S ribosomal complex. This chain is Translation initiation factor IF-2, found in Streptococcus suis (strain 98HAH33).